A 246-amino-acid polypeptide reads, in one-letter code: Acetoacetate decarboxylase (246 aa).

The Schiff-base intermediate with acetoacetate role is filled by lysine 116.

Belongs to the ADC family.

The enzyme catalyses acetoacetate + H(+) = acetone + CO2. Catalyzes the conversion of acetoacetate to acetone and carbon dioxide. The polypeptide is Acetoacetate decarboxylase (Clostridium botulinum (strain Eklund 17B / Type B)).